A 431-amino-acid chain; its full sequence is CCA-adding enzyme (431 aa).

2 residues coordinate ATP: Ser50 and Lys53. CTP is bound by residues Ser50 and Lys53. Asp61, Asp63, and Asp112 together coordinate Mg(2+). His135, Lys155, and Tyr164 together coordinate ATP. CTP-binding residues include His135, Lys155, and Tyr164.

The protein belongs to the tRNA nucleotidyltransferase/poly(A) polymerase family. Archaeal CCA-adding enzyme subfamily. Homodimer. Mg(2+) is required as a cofactor.

It carries out the reaction a tRNA precursor + 2 CTP + ATP = a tRNA with a 3' CCA end + 3 diphosphate. It catalyses the reaction a tRNA with a 3' CCA end + 2 CTP + ATP = a tRNA with a 3' CCACCA end + 3 diphosphate. Functionally, catalyzes the addition and repair of the essential 3'-terminal CCA sequence in tRNAs without using a nucleic acid template. Adds these three nucleotides in the order of C, C, and A to the tRNA nucleotide-73, using CTP and ATP as substrates and producing inorganic pyrophosphate. tRNA 3'-terminal CCA addition is required both for tRNA processing and repair. Also involved in tRNA surveillance by mediating tandem CCA addition to generate a CCACCA at the 3' terminus of unstable tRNAs. While stable tRNAs receive only 3'-terminal CCA, unstable tRNAs are marked with CCACCA and rapidly degraded. This chain is CCA-adding enzyme, found in Thermoplasma acidophilum (strain ATCC 25905 / DSM 1728 / JCM 9062 / NBRC 15155 / AMRC-C165).